The following is a 214-amino-acid chain: 3-demethoxyubiquinol 3-hydroxylase (214 aa).

Residues glutamate 63, glutamate 93, histidine 96, glutamate 145, glutamate 177, and histidine 180 each contribute to the Fe cation site.

Belongs to the COQ7 family. Fe cation serves as cofactor.

The protein localises to the cell membrane. It catalyses the reaction a 5-methoxy-2-methyl-3-(all-trans-polyprenyl)benzene-1,4-diol + AH2 + O2 = a 3-demethylubiquinol + A + H2O. Its pathway is cofactor biosynthesis; ubiquinone biosynthesis. Catalyzes the hydroxylation of 2-nonaprenyl-3-methyl-6-methoxy-1,4-benzoquinol during ubiquinone biosynthesis. This chain is 3-demethoxyubiquinol 3-hydroxylase, found in Nitrosococcus oceani (strain ATCC 19707 / BCRC 17464 / JCM 30415 / NCIMB 11848 / C-107).